The following is a 372-amino-acid chain: Flap endonuclease 1 (372 aa).

The segment at 1 to 105 (MGVKGLNQLI…GELEKRLLRR (105 aa)) is N-domain. Position 34 (Asp34) interacts with Mg(2+). DNA is bound by residues Arg47 and Arg71. Asp87, Glu159, Glu161, Asp180, and Asp182 together coordinate Mg(2+). Positions 123–254 (EVLKFEKRLV…ATAFKLIKEH (132 aa)) are I-domain. Glu159 lines the DNA pocket. Gly232 and Asp234 together coordinate DNA. Residue Asp234 participates in Mg(2+) binding. The interaction with PCNA stretch occupies residues 339-347 (VQGRLDGFF). Residues 353–366 (DDKKRKADPKESKA) are compositionally biased toward basic and acidic residues. The tract at residues 353–372 (DDKKRKADPKESKASKKKKK) is disordered.

This sequence belongs to the XPG/RAD2 endonuclease family. FEN1 subfamily. Interacts with PCNA. Three molecules of RAD27 bind to one PCNA trimer with each molecule binding to one PCNA monomer. PCNA stimulates the nuclease activity without altering cleavage specificity. Mg(2+) is required as a cofactor. In terms of processing, phosphorylated. Phosphorylation upon DNA damage induces relocalization to the nuclear plasma.

Its subcellular location is the nucleus. The protein localises to the nucleolus. It is found in the nucleoplasm. The protein resides in the mitochondrion. In terms of biological role, structure-specific nuclease with 5'-flap endonuclease and 5'-3' exonuclease activities involved in DNA replication and repair. During DNA replication, cleaves the 5'-overhanging flap structure that is generated by displacement synthesis when DNA polymerase encounters the 5'-end of a downstream Okazaki fragment. It enters the flap from the 5'-end and then tracks to cleave the flap base, leaving a nick for ligation. Also involved in the long patch base excision repair (LP-BER) pathway, by cleaving within the apurinic/apyrimidinic (AP) site-terminated flap. Acts as a genome stabilization factor that prevents flaps from equilibrating into structures that lead to duplications and deletions. Also possesses 5'-3' exonuclease activity on nicked or gapped double-stranded DNA, and exhibits RNase H activity. Also involved in replication and repair of rDNA and in repairing mitochondrial DNA. The polypeptide is Flap endonuclease 1 (Candida albicans (strain WO-1) (Yeast)).